Consider the following 443-residue polypeptide: Tol-Pal system protein TolB (443 aa).

The first 33 residues, 1–33 (MKIGIINTKIRTVFSAFACMIAASLVCTMPARA), serve as a signal peptide directing secretion.

The protein belongs to the TolB family. The Tol-Pal system is composed of five core proteins: the inner membrane proteins TolA, TolQ and TolR, the periplasmic protein TolB and the outer membrane protein Pal. They form a network linking the inner and outer membranes and the peptidoglycan layer.

It is found in the periplasm. Its function is as follows. Part of the Tol-Pal system, which plays a role in outer membrane invagination during cell division and is important for maintaining outer membrane integrity. In Brucella anthropi (strain ATCC 49188 / DSM 6882 / CCUG 24695 / JCM 21032 / LMG 3331 / NBRC 15819 / NCTC 12168 / Alc 37) (Ochrobactrum anthropi), this protein is Tol-Pal system protein TolB.